Reading from the N-terminus, the 493-residue chain is Ectonucleoside triphosphate diphosphohydrolase 8 (493 aa).

The Cytoplasmic segment spans residues 1 to 7; it reads MEYKGKV. A helical membrane pass occupies residues 8-28; sequence VAGLLTATCVFSIIALILSAV. At 29–463 the chain is on the extracellular side; that stretch reads DVKDVFLPPG…ALEHVKGHEP (435 aa). 3 N-linked (GlcNAc...) asparagine glycosylation sites follow: Asn-65, Asn-79, and Asn-133. Cys-76 and Cys-100 are oxidised to a cystine. Glu-166 serves as the catalytic Proton acceptor. Asn-223, Asn-234, Asn-267, Asn-324, Asn-330, Asn-361, Asn-372, Asn-382, and Asn-445 each carry an N-linked (GlcNAc...) asparagine glycan. Cys-244 and Cys-291 form a disulfide bridge. The cysteines at positions 327 and 333 are disulfide-linked. A disulfide bridge connects residues Cys-379 and Cys-401. A helical membrane pass occupies residues 464-486; it reads SLWAGAISFIVLAIVAGLVAILL. Residues 487–493 are Cytoplasmic-facing; that stretch reads QCFWKSK.

Belongs to the GDA1/CD39 NTPase family. It depends on Ca(2+) as a cofactor. The cofactor is Mg(2+). In terms of processing, N-glycosylated.

Its subcellular location is the cell membrane. The catalysed reaction is a ribonucleoside 5'-triphosphate + 2 H2O = a ribonucleoside 5'-phosphate + 2 phosphate + 2 H(+). In terms of biological role, canalicular ectonucleoside NTPDase responsible for the main hepatic NTPDase activity. Ectonucleoside ATPases catalyze the hydrolysis of gamma- and beta-phosphate residues of nucleotides, playing a central role in concentration of extracellular nucleotides. The sequence is that of Ectonucleoside triphosphate diphosphohydrolase 8 (ENTPD8) from Gallus gallus (Chicken).